The primary structure comprises 398 residues: UDP-N-acetylglucosamine--N-acetylmuramyl-(pentapeptide) pyrophosphoryl-undecaprenol N-acetylglucosamine transferase (398 aa).

Residues 11–13 (TGG), N124, R164, S192, and Q318 each bind UDP-N-acetyl-alpha-D-glucosamine.

This sequence belongs to the glycosyltransferase 28 family. MurG subfamily.

The protein resides in the cell membrane. The catalysed reaction is di-trans,octa-cis-undecaprenyl diphospho-N-acetyl-alpha-D-muramoyl-L-alanyl-D-glutamyl-meso-2,6-diaminopimeloyl-D-alanyl-D-alanine + UDP-N-acetyl-alpha-D-glucosamine = di-trans,octa-cis-undecaprenyl diphospho-[N-acetyl-alpha-D-glucosaminyl-(1-&gt;4)]-N-acetyl-alpha-D-muramoyl-L-alanyl-D-glutamyl-meso-2,6-diaminopimeloyl-D-alanyl-D-alanine + UDP + H(+). The protein operates within cell wall biogenesis; peptidoglycan biosynthesis. Its function is as follows. Cell wall formation. Catalyzes the transfer of a GlcNAc subunit on undecaprenyl-pyrophosphoryl-MurNAc-pentapeptide (lipid intermediate I) to form undecaprenyl-pyrophosphoryl-MurNAc-(pentapeptide)GlcNAc (lipid intermediate II). This is UDP-N-acetylglucosamine--N-acetylmuramyl-(pentapeptide) pyrophosphoryl-undecaprenol N-acetylglucosamine transferase from Deinococcus radiodurans (strain ATCC 13939 / DSM 20539 / JCM 16871 / CCUG 27074 / LMG 4051 / NBRC 15346 / NCIMB 9279 / VKM B-1422 / R1).